Consider the following 292-residue polypeptide: Poly(U)-specific endoribonuclease-A (292 aa).

The 278-residue stretch at 8-285 (LNHELSKLFN…IGTAYPVLLS (278 aa)) folds into the EndoU domain. Active-site residues include His162, His178, and Lys224.

It belongs to the ENDOU family. Monomer. It depends on Mn(2+) as a cofactor.

It is found in the nucleus. It catalyses the reaction uridylyl-uridylyl-ribonucleotide-RNA = a 3'-end uridylyl-2',3'-cyclophospho-uridine-RNA + a 5'-end dephospho-ribonucleoside-RNA. Poly(U)-specific endoribonuclease involved in the processing of intron-encoded box C/D snoRNAs, such as U16 and U86. Releases products that have 2',3'-cyclic phosphate termini at the 3'-end. This is Poly(U)-specific endoribonuclease-A (endou-a) from Xenopus laevis (African clawed frog).